The sequence spans 130 residues: UPF0102 protein AHA_3896 (130 aa).

This sequence belongs to the UPF0102 family.

This is UPF0102 protein AHA_3896 from Aeromonas hydrophila subsp. hydrophila (strain ATCC 7966 / DSM 30187 / BCRC 13018 / CCUG 14551 / JCM 1027 / KCTC 2358 / NCIMB 9240 / NCTC 8049).